Here is a 174-residue protein sequence, read N- to C-terminus: Shikimate kinase 2 (174 aa).

Residue 12–17 (GCGKTT) participates in ATP binding. Residues Thr16 and Asp32 each contribute to the Mg(2+) site. Substrate is bound by residues Asp34, Arg58, and Gly79. The segment at 112–126 (QAAPEEDLRPTLTGK) is LID domain. Arg120 serves as a coordination point for ATP. Arg139 serves as a coordination point for substrate.

Belongs to the shikimate kinase family. AroL subfamily. As to quaternary structure, monomer. Mg(2+) serves as cofactor.

The protein localises to the cytoplasm. It catalyses the reaction shikimate + ATP = 3-phosphoshikimate + ADP + H(+). It functions in the pathway metabolic intermediate biosynthesis; chorismate biosynthesis; chorismate from D-erythrose 4-phosphate and phosphoenolpyruvate: step 5/7. In terms of biological role, catalyzes the specific phosphorylation of the 3-hydroxyl group of shikimic acid using ATP as a cosubstrate. The sequence is that of Shikimate kinase 2 from Shigella boydii serotype 18 (strain CDC 3083-94 / BS512).